A 156-amino-acid polypeptide reads, in one-letter code: Small ribosomal subunit protein uS7c (156 aa).

Belongs to the universal ribosomal protein uS7 family. In terms of assembly, part of the 30S ribosomal subunit.

Its subcellular location is the plastid. It localises to the chloroplast. Functionally, one of the primary rRNA binding proteins, it binds directly to 16S rRNA where it nucleates assembly of the head domain of the 30S subunit. In Pyropia yezoensis (Susabi-nori), this protein is Small ribosomal subunit protein uS7c (rps7).